A 198-amino-acid polypeptide reads, in one-letter code: Nucleoid occlusion factor SlmA (198 aa).

The region spanning 9 to 70 is the HTH tetR-type domain; the sequence is RNRREEILQS…SLIEFIEDSL (62 aa). Residues 33–52 constitute a DNA-binding region (H-T-H motif); sequence TTAKLAASVGVSEAALYRHF. Residues 117-145 are a coiled coil; that stretch reads EQDRLQGRINQLFERIEAQLRQVLREKKM.

This sequence belongs to the nucleoid occlusion factor SlmA family. Homodimer. Interacts with FtsZ.

The protein resides in the cytoplasm. Its subcellular location is the nucleoid. Functionally, required for nucleoid occlusion (NO) phenomenon, which prevents Z-ring formation and cell division over the nucleoid. Acts as a DNA-associated cell division inhibitor that binds simultaneously chromosomal DNA and FtsZ, and disrupts the assembly of FtsZ polymers. SlmA-DNA-binding sequences (SBS) are dispersed on non-Ter regions of the chromosome, preventing FtsZ polymerization at these regions. In Cronobacter sakazakii (strain ATCC BAA-894) (Enterobacter sakazakii), this protein is Nucleoid occlusion factor SlmA.